A 278-amino-acid polypeptide reads, in one-letter code: Large ribosomal subunit protein uL2 (278 aa).

Residues 222-278 (GVVMNPIDHPHGGGEGRTSGGRHPVTPWGKPTKGKKTRSNKSTDKFILISRHKRKKK) are disordered.

It belongs to the universal ribosomal protein uL2 family. As to quaternary structure, part of the 50S ribosomal subunit. Forms a bridge to the 30S subunit in the 70S ribosome.

Its function is as follows. One of the primary rRNA binding proteins. Required for association of the 30S and 50S subunits to form the 70S ribosome, for tRNA binding and peptide bond formation. It has been suggested to have peptidyltransferase activity; this is somewhat controversial. Makes several contacts with the 16S rRNA in the 70S ribosome. The polypeptide is Large ribosomal subunit protein uL2 (Rhodopseudomonas palustris (strain BisB5)).